Consider the following 817-residue polypeptide: DNA ligase (817 aa).

NAD(+) is bound by residues 45–49 (DVEYD), 94–95 (SI), and Glu-131. Catalysis depends on Lys-133, which acts as the N6-AMP-lysine intermediate. The NAD(+) site is built by Arg-154, Glu-193, Lys-311, and Lys-335. The Zn(2+) site is built by Cys-444, Cys-447, Cys-462, and Cys-468. One can recognise a BRCT domain in the interval 733-817 (AEEGVLDGKT…LLKKPAGDQA (85 aa)).

It belongs to the NAD-dependent DNA ligase family. LigA subfamily. Mg(2+) serves as cofactor. Mn(2+) is required as a cofactor.

It carries out the reaction NAD(+) + (deoxyribonucleotide)n-3'-hydroxyl + 5'-phospho-(deoxyribonucleotide)m = (deoxyribonucleotide)n+m + AMP + beta-nicotinamide D-nucleotide.. DNA ligase that catalyzes the formation of phosphodiester linkages between 5'-phosphoryl and 3'-hydroxyl groups in double-stranded DNA using NAD as a coenzyme and as the energy source for the reaction. It is essential for DNA replication and repair of damaged DNA. The sequence is that of DNA ligase from Ralstonia pickettii (strain 12J).